A 776-amino-acid polypeptide reads, in one-letter code: LPS-assembly protein LptD (776 aa).

Residues Met-1–Ala-24 form the signal peptide.

Belongs to the LptD family. Component of the lipopolysaccharide transport and assembly complex. Interacts with LptE and LptA.

It is found in the cell outer membrane. Its function is as follows. Together with LptE, is involved in the assembly of lipopolysaccharide (LPS) at the surface of the outer membrane. This Vibrio vulnificus (strain YJ016) protein is LPS-assembly protein LptD.